We begin with the raw amino-acid sequence, 532 residues long: Zinc finger protein ZIC 2 (532 aa).

The necessary for interaction with MDFIC and transcriptional activation or repression stretch occupies residues 100–255 (PHAAHVGSYS…YMRQQCIKQE (156 aa)). Phosphoserine is present on residues serine 191 and serine 199. A Glycyl lysine isopeptide (Lys-Gly) (interchain with G-Cter in SUMO2) cross-link involves residue lysine 253. The segment at 256-291 (LICKWIDPEQLSNPKKSCNKTFSTMHELVTHVSVEH) adopts a C2H2-type 1; atypical zinc-finger fold. The C2H2-type 2; atypical zinc-finger motif lies at 300–327 (HVCFWEECPREGKPFKAKYKLVNHIRVH). 3 C2H2-type zinc fingers span residues 333–357 (FPCP…KRTH), 363–387 (FQCE…MHVH), and 393–415 (YLCK…MKVH). Disordered regions lie at residues 406–452 (SSLR…SSSN) and 475–532 (HRGG…EWYV). Low complexity predominate over residues 417 to 435 (SSPQGSESSPAASSGYESS). Positions 476–521 (RGGGSGSGGAGGGSGGGSGSGGGGGGAGGGGGGSSGGGSGTAGGHS) are enriched in gly residues. Residues 523–532 (LSSNFNEWYV) are compositionally biased toward polar residues.

Belongs to the GLI C2H2-type zinc-finger protein family. In terms of assembly, interacts with RNF180. Interacts (via the C2H2-type domains 3, 4 and 5) with MDFIC (via the C2H2-type domains 3, 4 and 5); the interaction reduces its transcriptional activity. Interacts with GLI1 and GLI2. Interacts (via C2H2-type domain 3) with DHX9. Post-translationally, phosphorylated. Ubiquitinated by RNF180, leading to its degradation.

The protein localises to the nucleus. It localises to the cytoplasm. In terms of biological role, acts as a transcriptional activator or repressor. Plays important roles in the early stage of organogenesis of the CNS. Activates the transcription of the serotonin transporter SERT in uncrossed ipsilateral retinal ganglion cells (iRGCs) to refine eye-specific projections in primary visual targets. Its transcriptional activity is repressed by MDFIC. Involved in the formation of the ipsilateral retinal projection at the optic chiasm midline. Drives the expression of EPHB1 on ipsilaterally projecting growth cones. Binds to the minimal GLI-consensus sequence 5'-TGGGTGGTC-3'. Associates to the basal SERT promoter region from ventrotemporal retinal segments of retinal embryos. This Homo sapiens (Human) protein is Zinc finger protein ZIC 2 (ZIC2).